The chain runs to 1416 residues: Non-structural polyprotein 1AB (1416 aa).

Residues 104 to 146 (KLIHKANALQERLRLSQEEKATLTLDVQFLQHENVRLKELISK) adopt a coiled-coil conformation. 5 helical membrane-spanning segments follow: residues 154–174 (MKWI…GGYA), 239–259 (VFYY…LAIG), 286–306 (VLPT…TLMV), 313–333 (LLAI…LCFM), and 344–364 (GLIA…LTGT). Catalysis depends on charge relay system; for serine protease activity residues His-461, Asp-489, and Ser-551. Positions 587–614 (VKAPSQVELLKEEIERLKAQLNSAAENP) form a coiled coil. Tyr-693 bears the O-(5'-phospho-RNA)-tyrosine mark. Residues 752 to 815 (NFDQAKPTPA…DPQPYSQTYG (64 aa)) are disordered. Basic and acidic residues predominate over residues 783–795 (SQKKDKQLEHEQQ). Residues 805–814 (NDPQPYSQTY) show a composition bias toward polar residues. The RdRp catalytic domain maps to 1161–1287 (KYFIEFDWTR…TTPSVPENYE (127 aa)).

This sequence belongs to the astroviridae polyprotein 1AB family. As to quaternary structure, monomer. In terms of processing, cleaved by the viral and host proteases. The protease is probably autocatalytically cleaved.

The protein localises to the host membrane. The catalysed reaction is RNA(n) + a ribonucleoside 5'-triphosphate = RNA(n+1) + diphosphate. In terms of biological role, responsible for the cleavage of the polyprotein into functional products. Its function is as follows. Protein covalently attached to the 5' extremity of the genomic and subgenomic RNAs. It may serve as a primer for the replicase. This chain is Non-structural polyprotein 1AB (ORF1), found in Homo sapiens (Human).